The following is a 544-amino-acid chain: CTP synthase (544 aa).

Residues 1–265 (MTKFIFVTGG…DDIICEHLDL (265 aa)) form an amidoligase domain region. Position 13 (serine 13) interacts with CTP. Serine 13 contributes to the UTP binding site. ATP-binding positions include 14-19 (SLGKGI) and aspartate 71. Mg(2+) contacts are provided by aspartate 71 and glutamate 139. CTP-binding positions include 146–148 (DIE), 186–191 (KTKPTQ), and lysine 222. UTP is bound by residues 186 to 191 (KTKPTQ) and lysine 222. Residues 290–542 (NIAMVGKYVD…VEAALAYQAD (253 aa)) form the Glutamine amidotransferase type-1 domain. An L-glutamine-binding site is contributed by glycine 351. The active-site Nucleophile; for glutamine hydrolysis is cysteine 378. Residues 379-382 (LGMQ), glutamate 402, and arginine 469 contribute to the L-glutamine site. Residues histidine 515 and glutamate 517 contribute to the active site.

It belongs to the CTP synthase family. In terms of assembly, homotetramer.

It carries out the reaction UTP + L-glutamine + ATP + H2O = CTP + L-glutamate + ADP + phosphate + 2 H(+). It catalyses the reaction L-glutamine + H2O = L-glutamate + NH4(+). The catalysed reaction is UTP + NH4(+) + ATP = CTP + ADP + phosphate + 2 H(+). It functions in the pathway pyrimidine metabolism; CTP biosynthesis via de novo pathway; CTP from UDP: step 2/2. With respect to regulation, allosterically activated by GTP, when glutamine is the substrate; GTP has no effect on the reaction when ammonia is the substrate. The allosteric effector GTP functions by stabilizing the protein conformation that binds the tetrahedral intermediate(s) formed during glutamine hydrolysis. Inhibited by the product CTP, via allosteric rather than competitive inhibition. In terms of biological role, catalyzes the ATP-dependent amination of UTP to CTP with either L-glutamine or ammonia as the source of nitrogen. Regulates intracellular CTP levels through interactions with the four ribonucleotide triphosphates. This is CTP synthase from Laribacter hongkongensis (strain HLHK9).